Here is a 199-residue protein sequence, read N- to C-terminus: Adenylate kinase (199 aa).

8-13 (GAGKGT) provides a ligand contact to ATP. Positions 28 to 57 (STGDIFRANIKNKTELGQQVKAIVDAGDYV) are NMP. Residues threonine 29, arginine 34, 55–57 (DYV), 83–86 (GYPR), and glutamine 90 each bind AMP. Positions 124–134 (KRAREQGRADD) are LID. Arginine 125 contacts ATP. Arginine 131 and arginine 142 together coordinate AMP. Glycine 170 is an ATP binding site.

This sequence belongs to the adenylate kinase family. In terms of assembly, monomer.

Its subcellular location is the cytoplasm. It carries out the reaction AMP + ATP = 2 ADP. It functions in the pathway purine metabolism; AMP biosynthesis via salvage pathway; AMP from ADP: step 1/1. Its function is as follows. Catalyzes the reversible transfer of the terminal phosphate group between ATP and AMP. Plays an important role in cellular energy homeostasis and in adenine nucleotide metabolism. The sequence is that of Adenylate kinase from Leifsonia xyli subsp. xyli (strain CTCB07).